We begin with the raw amino-acid sequence, 338 residues long: MAEISILGAGGLTGKELLLLFSRQKEHEVVHITSDKLAGKTISEVFPEVSFPKNLVFKKHEDIVPLKSLVVLAVPNEVSVESAPKFLDAGHKVIDLSGVYRLHNQEILEKYYKLKHTRFNYINRAVFGIPEIFRDQLKNADFVSNPGCFSTSVILPIFLLGQLRKNLRPRIIVDSKSGVSGAGGRTEDSGYSYTSVYENFRAYKILSHQHEPEIREYVYSKSGLSDPEVIFTPHLLPVYRGILSTIVLEFDSEPEQDLISILENSSLNEPFIRILKTPEEVELKKVQHTNFLDISLRKRENTLVVVSALDNLVKGAAGQALQNINLMTGAKETLGLLP.

Cysteine 148 is an active-site residue.

This sequence belongs to the NAGSA dehydrogenase family. Type 1 subfamily.

It localises to the cytoplasm. It catalyses the reaction N-acetyl-L-glutamate 5-semialdehyde + phosphate + NADP(+) = N-acetyl-L-glutamyl 5-phosphate + NADPH + H(+). It participates in amino-acid biosynthesis; L-arginine biosynthesis; N(2)-acetyl-L-ornithine from L-glutamate: step 3/4. Its function is as follows. Catalyzes the NADPH-dependent reduction of N-acetyl-5-glutamyl phosphate to yield N-acetyl-L-glutamate 5-semialdehyde. This chain is N-acetyl-gamma-glutamyl-phosphate reductase, found in Leptospira interrogans serogroup Icterohaemorrhagiae serovar Lai (strain 56601).